We begin with the raw amino-acid sequence, 447 residues long: tRNA modification GTPase MnmE (447 aa).

(6S)-5-formyl-5,6,7,8-tetrahydrofolate is bound by residues R24, E81, and K120. Residues 216–371 enclose the TrmE-type G domain; that stretch reads GLNVAIAGKP…LRKELSNISG (156 aa). N226 serves as a coordination point for K(+). Residues 226–231, 245–251, and 270–273 contribute to the GTP site; these read NAGKSS, TDIAGTT, and DTAG. S230 serves as a coordination point for Mg(2+). Residues T245, I247, and T250 each coordinate K(+). T251 lines the Mg(2+) pocket. K447 serves as a coordination point for (6S)-5-formyl-5,6,7,8-tetrahydrofolate.

Belongs to the TRAFAC class TrmE-Era-EngA-EngB-Septin-like GTPase superfamily. TrmE GTPase family. In terms of assembly, homodimer. Heterotetramer of two MnmE and two MnmG subunits. It depends on K(+) as a cofactor.

It localises to the cytoplasm. In terms of biological role, exhibits a very high intrinsic GTPase hydrolysis rate. Involved in the addition of a carboxymethylaminomethyl (cmnm) group at the wobble position (U34) of certain tRNAs, forming tRNA-cmnm(5)s(2)U34. In Vesicomyosocius okutanii subsp. Calyptogena okutanii (strain HA), this protein is tRNA modification GTPase MnmE.